We begin with the raw amino-acid sequence, 130 residues long: Inner membrane protein YqjF (130 aa).

The Cytoplasmic portion of the chain corresponds to 1-5; the sequence is MKKLE. Residues 6–26 form a helical membrane-spanning segment; sequence DVGVLVARILMPILFITAGWG. Over 27 to 45 the chain is Periplasmic; it reads KITGYAGTQQYMEAMGVPG. The helical transmembrane segment at 46–66 threads the bilayer; sequence FMLPLVILLEFGGGLAILFGF. Residues 67-70 are Cytoplasmic-facing; sequence LTRT. A helical membrane pass occupies residues 71-91; it reads TALFTAGFTLLTAFLFHSNFA. Residues 92 to 101 are Periplasmic-facing; it reads EGVNSLMFMK. A helical membrane pass occupies residues 102-122; that stretch reads NLTISGGFLLLAITGPGAYSI. Residues 123-130 lie on the Cytoplasmic side of the membrane; it reads DRLLNKKW.

It belongs to the DoxX family.

Its subcellular location is the cell inner membrane. This Escherichia coli (strain K12) protein is Inner membrane protein YqjF (yqjF).